The chain runs to 553 residues: 4-coumarate--CoA ligase (553 aa).

ATP-binding residues include Ser198, Ser199, Gly200, Thr201, Thr202, and Lys206. 2 residues coordinate (E)-4-coumaroyl-AMP: Tyr248 and Ser252. Lys269 is a binding site for CoA. Residues 271–340 (EIVPFLELIQ…AKFPNAKLGQ (70 aa)) are SBD1. (E)-4-coumaroyl-AMP-binding residues include Ala318, Gln340, Gly341, Thr345, and Met353. ATP-binding residues include Gln340, Gly341, and Thr345. The interval 341-408 (GYGMTEAGPV…IRGDQIMKGY (68 aa)) is SBD2. Residues Asp429 and Arg444 each coordinate ATP. Residues Lys446 and Lys450 each coordinate (E)-4-coumaroyl-AMP. Positions 452 and 453 each coordinate CoA. An ATP-binding site is contributed by Lys535.

It belongs to the ATP-dependent AMP-binding enzyme family. It depends on Mg(2+) as a cofactor.

The enzyme catalyses (E)-4-coumarate + ATP + CoA = (E)-4-coumaroyl-CoA + AMP + diphosphate. It carries out the reaction (E)-4-coumarate + ATP + H(+) = (E)-4-coumaroyl-AMP + diphosphate. It catalyses the reaction (E)-4-coumaroyl-AMP + CoA = (E)-4-coumaroyl-CoA + AMP + H(+). The protein operates within phytoalexin biosynthesis; 3,4',5-trihydroxystilbene biosynthesis; 3,4',5-trihydroxystilbene from trans-4-coumarate: step 1/2. Carboxylate--CoA ligase that may use 4-coumarate as substrate. Follows a two-step reaction mechanism, wherein the carboxylate substrate first undergoes adenylation by ATP, followed by a thioesterification in the presence of CoA to yield the final CoA thioester. This is 4-coumarate--CoA ligase from Vanilla planifolia (Vanilla).